The following is a 182-amino-acid chain: Heat shock protein beta-2 (182 aa).

In terms of domain architecture, sHSP spans 55–163; the sequence is RAGEGARAGA…DTEVNEVYIS (109 aa).

It belongs to the small heat shock protein (HSP20) family. In terms of assembly, interacts with DMPK; may enhance its kinase activity.

The protein localises to the cytoplasm. It localises to the nucleus. Its function is as follows. May regulate the kinase DMPK. This chain is Heat shock protein beta-2 (Hspb2), found in Mus musculus (Mouse).